The primary structure comprises 387 residues: O-phospho-L-seryl-tRNA:Cys-tRNA synthase 2 (387 aa).

Pyridoxal 5'-phosphate contacts are provided by residues Ala89–Arg90, Asn196, and Ser219–His221. Residue Lys222 is modified to N6-(pyridoxal phosphate)lysine.

This sequence belongs to the SepCysS family. In terms of assembly, homodimer. Interacts with SepRS. The cofactor is pyridoxal 5'-phosphate.

It catalyses the reaction O-phospho-L-seryl-tRNA(Cys) + hydrogen sulfide + H(+) = L-cysteinyl-tRNA(Cys) + phosphate. Its function is as follows. Converts O-phospho-L-seryl-tRNA(Cys) (Sep-tRNA(Cys)) to L-cysteinyl-tRNA(Cys) (Cys-tRNA(Cys)). This is O-phospho-L-seryl-tRNA:Cys-tRNA synthase 2 from Methanococcoides burtonii (strain DSM 6242 / NBRC 107633 / OCM 468 / ACE-M).